Reading from the N-terminus, the 586-residue chain is MVRSVFALVFAAVLLGGCASVPSSSAPQAIGTVERPAPSNLPKPIPGMDPDVLLREFLKATADPANRHLAARQFLTQSASNAWDDAGSALLIDHVVFVETRGAERVSATMRADILGSLSDMGVFETAEGELPDPGPIELVKTSGGWRIDRLPNGVFLDWQQFQSTYKRNTLYFADPTGKTVVPDPRYVAVSDHDQLATELVSKLLAGPRPEMAHSVRNLLAPPLRLRGPVTRADGGKSGIGKGYGGARIDLEKLSTTDSHSRQLLAAQIIWTLARADIRGPYVINADGAPLDDRFAEGWTTSDVAATDPGVADGAGAGLHALVGGSLVALDGQRITTVEGAFGRMGDQTGAALSRTGRLVASVVTLRRGAPDVAASLWIGELGAEAVQAADGHNLSRPSWSLDDAVWVVVDTNNVLRAIQEPASGQPARIPVDSTAVSSRFPGAITDLQLSRDGTRAAMVIDGRVILSSVEQTQAGQFALTYPRRLGFGLGTSVVSLSWRTGDDIVVTRNDVGHPVSYVNLDGVNSDAPARGLQIPLFAIAANPSTVYVAGPQGVMMYSASSAEGQQSWAEVPGLMVTGAAPVLPG.

Positions 1–17 (MVRSVFALVFAAVLLGG) are cleaved as a signal peptide. A lipid anchor (N-palmitoyl cysteine) is attached at Cys-18. Cys-18 carries S-diacylglycerol cysteine lipidation. Positions 26–45 (APQAIGTVERPAPSNLPKPI) are disordered.

It belongs to the LpqB lipoprotein family.

Its subcellular location is the cell membrane. This chain is Lipoprotein LpqB, found in Mycobacterium ulcerans (strain Agy99).